Reading from the N-terminus, the 299-residue chain is Transcription factor BHLH148 (299 aa).

The interval 90–127 is disordered; it reads RMGGGGGGGEKGEGEEMEEEEEVPQRRRRGQGADVESS. Acidic residues predominate over residues 102 to 111; it reads EGEEMEEEEE. The interval 127–140 is basic motif; degenerate; the sequence is SRGFRHMMRERQRR. In terms of domain architecture, bHLH spans 127-176; it reads SRGFRHMMRERQRREKLSQSYADLYAMVSSRSKGDKNSIVQSAAIYIHEL. The tract at residues 141-176 is helix-loop-helix motif; the sequence is EKLSQSYADLYAMVSSRSKGDKNSIVQSAAIYIHEL. Residues 273–299 are disordered; that stretch reads ERNQPDSDAPFPGSKGWTQTSHVQNVF. Residues 288–299 are compositionally biased toward polar residues; it reads GWTQTSHVQNVF.

This sequence belongs to the bHLH protein family. In terms of assembly, interacts with TIFY10A/JAZ6, TIFY10B/JAZ7, TIFY11A/JAZ9, TIFY11C/JAZ11, and TIFY11D/JAZ12.

Its subcellular location is the nucleus. May act on an initial response of jasmonate-regulated gene expression toward drought tolerance as part of a BHLH148-TIFY11D/JAZ12-COI1A complex. This chain is Transcription factor BHLH148, found in Oryza sativa subsp. japonica (Rice).